A 526-amino-acid polypeptide reads, in one-letter code: Peptide chain release factor 3 (526 aa).

The region spanning 9 to 277 (DLRRTFAIIS…GLTKWAPKPL (269 aa)) is the tr-type G domain. Residues 18–25 (SHPDAGKT), 86–90 (DTPGH), and 140–143 (NKMD) each bind GTP.

It belongs to the TRAFAC class translation factor GTPase superfamily. Classic translation factor GTPase family. PrfC subfamily.

It is found in the cytoplasm. Its function is as follows. Increases the formation of ribosomal termination complexes and stimulates activities of RF-1 and RF-2. It binds guanine nucleotides and has strong preference for UGA stop codons. It may interact directly with the ribosome. The stimulation of RF-1 and RF-2 is significantly reduced by GTP and GDP, but not by GMP. This chain is Peptide chain release factor 3, found in Colwellia psychrerythraea (strain 34H / ATCC BAA-681) (Vibrio psychroerythus).